We begin with the raw amino-acid sequence, 350 residues long: S-adenosylmethionine:tRNA ribosyltransferase-isomerase (350 aa).

It belongs to the QueA family. In terms of assembly, monomer.

The protein localises to the cytoplasm. The enzyme catalyses 7-aminomethyl-7-carbaguanosine(34) in tRNA + S-adenosyl-L-methionine = epoxyqueuosine(34) in tRNA + adenine + L-methionine + 2 H(+). The protein operates within tRNA modification; tRNA-queuosine biosynthesis. In terms of biological role, transfers and isomerizes the ribose moiety from AdoMet to the 7-aminomethyl group of 7-deazaguanine (preQ1-tRNA) to give epoxyqueuosine (oQ-tRNA). The polypeptide is S-adenosylmethionine:tRNA ribosyltransferase-isomerase (Parvibaculum lavamentivorans (strain DS-1 / DSM 13023 / NCIMB 13966)).